The chain runs to 172 residues: Phosphopantetheine adenylyltransferase (172 aa).

S9 is a binding site for substrate. ATP contacts are provided by residues 9-10 (SF) and H17. Residues K41, L78, and R92 each coordinate substrate. ATP is bound by residues 93-95 (GLR), E103, and 128-134 (GRAITST).

This sequence belongs to the bacterial CoaD family. In terms of assembly, homohexamer. It depends on Mg(2+) as a cofactor.

The protein resides in the cytoplasm. It catalyses the reaction (R)-4'-phosphopantetheine + ATP + H(+) = 3'-dephospho-CoA + diphosphate. The protein operates within cofactor biosynthesis; coenzyme A biosynthesis; CoA from (R)-pantothenate: step 4/5. Functionally, reversibly transfers an adenylyl group from ATP to 4'-phosphopantetheine, yielding dephospho-CoA (dPCoA) and pyrophosphate. The chain is Phosphopantetheine adenylyltransferase from Bartonella quintana (strain Toulouse) (Rochalimaea quintana).